The sequence spans 274 residues: 3-methyl-2-oxobutanoate hydroxymethyltransferase (274 aa).

2 residues coordinate Mg(2+): Asp-44 and Asp-83. 3-methyl-2-oxobutanoate contacts are provided by residues Asp-44 to Ser-45, Asp-83, and Lys-113. Glu-115 provides a ligand contact to Mg(2+). The active-site Proton acceptor is the Glu-182.

The protein belongs to the PanB family. Homodecamer; pentamer of dimers. Requires Mg(2+) as cofactor.

The protein localises to the cytoplasm. The enzyme catalyses 3-methyl-2-oxobutanoate + (6R)-5,10-methylene-5,6,7,8-tetrahydrofolate + H2O = 2-dehydropantoate + (6S)-5,6,7,8-tetrahydrofolate. It functions in the pathway cofactor biosynthesis; (R)-pantothenate biosynthesis; (R)-pantoate from 3-methyl-2-oxobutanoate: step 1/2. Catalyzes the reversible reaction in which hydroxymethyl group from 5,10-methylenetetrahydrofolate is transferred onto alpha-ketoisovalerate to form ketopantoate. This is 3-methyl-2-oxobutanoate hydroxymethyltransferase from Campylobacter jejuni (strain RM1221).